We begin with the raw amino-acid sequence, 137 residues long: Nucleoside diphosphate kinase (137 aa).

Residues lysine 10, phenylalanine 59, arginine 87, threonine 93, arginine 104, and asparagine 114 each coordinate ATP. Catalysis depends on histidine 117, which acts as the Pros-phosphohistidine intermediate.

It belongs to the NDK family. In terms of assembly, homotetramer. The cofactor is Mg(2+).

Its subcellular location is the cytoplasm. It carries out the reaction a 2'-deoxyribonucleoside 5'-diphosphate + ATP = a 2'-deoxyribonucleoside 5'-triphosphate + ADP. The catalysed reaction is a ribonucleoside 5'-diphosphate + ATP = a ribonucleoside 5'-triphosphate + ADP. In terms of biological role, major role in the synthesis of nucleoside triphosphates other than ATP. The ATP gamma phosphate is transferred to the NDP beta phosphate via a ping-pong mechanism, using a phosphorylated active-site intermediate. This Streptomyces coelicolor (strain ATCC BAA-471 / A3(2) / M145) protein is Nucleoside diphosphate kinase.